The chain runs to 173 residues: Superoxide dismutase [Cu-Zn] (173 aa).

Positions M1–A19 are cleaved as a signal peptide. Positions 67, 69, and 92 each coordinate Cu cation. Residues G72 to L113 form a disordered region. An intrachain disulfide couples C74 to C169. Residues H92, H101, H109, and D112 each coordinate Zn(2+). Position 147 (H147) interacts with Cu cation.

It belongs to the Cu-Zn superoxide dismutase family. As to quaternary structure, monomer. Requires Cu cation as cofactor. Zn(2+) serves as cofactor.

It localises to the periplasm. The enzyme catalyses 2 superoxide + 2 H(+) = H2O2 + O2. Functionally, destroys radicals which are normally produced within the cells and which are toxic to biological systems. This is Superoxide dismutase [Cu-Zn] (sodC) from Escherichia coli O157:H7.